Consider the following 252-residue polypeptide: Adenosylcobinamide-GDP ribazoletransferase (252 aa).

Helical transmembrane passes span 29–49 (LYWF…LGYV), 50–70 (GSLS…GIVL), 104–124 (VGSF…VAVV), 129–149 (FGLF…QVLL), 166–186 (FVAG…LALL), and 194–214 (FPTM…VGMV).

The protein belongs to the CobS family. Mg(2+) serves as cofactor.

It localises to the cell inner membrane. The enzyme catalyses alpha-ribazole + adenosylcob(III)inamide-GDP = adenosylcob(III)alamin + GMP + H(+). It carries out the reaction alpha-ribazole 5'-phosphate + adenosylcob(III)inamide-GDP = adenosylcob(III)alamin 5'-phosphate + GMP + H(+). It functions in the pathway cofactor biosynthesis; adenosylcobalamin biosynthesis; adenosylcobalamin from cob(II)yrinate a,c-diamide: step 7/7. Its function is as follows. Joins adenosylcobinamide-GDP and alpha-ribazole to generate adenosylcobalamin (Ado-cobalamin). Also synthesizes adenosylcobalamin 5'-phosphate from adenosylcobinamide-GDP and alpha-ribazole 5'-phosphate. The chain is Adenosylcobinamide-GDP ribazoletransferase from Chlorobium chlorochromatii (strain CaD3).